We begin with the raw amino-acid sequence, 206 residues long: Small ribosomal subunit protein uS4 (206 aa).

The region spanning 96 to 168 (SRLDNVVYRM…LELAEQREKP (73 aa)) is the S4 RNA-binding domain.

Belongs to the universal ribosomal protein uS4 family. In terms of assembly, part of the 30S ribosomal subunit. Contacts protein S5. The interaction surface between S4 and S5 is involved in control of translational fidelity.

In terms of biological role, one of the primary rRNA binding proteins, it binds directly to 16S rRNA where it nucleates assembly of the body of the 30S subunit. With S5 and S12 plays an important role in translational accuracy. The protein is Small ribosomal subunit protein uS4 of Baumannia cicadellinicola subsp. Homalodisca coagulata.